The following is a 457-amino-acid chain: Proton extrusion protein PxcA (457 aa).

4 helical membrane-spanning segments follow: residues 239 to 259 (FILL…TFFL), 332 to 352 (INAI…GVVI), 368 to 390 (GILY…DMFV), and 417 to 437 (FNFL…KYWI).

It belongs to the CemA family.

It is found in the cell inner membrane. Functionally, required for H(+) efflux immediately after light irradiation to form a rapid H(+) concentration gradient across the thylakoid membranes. Together with PxcL, contributes to transient H(+) uptake following dark to light transition. The chain is Proton extrusion protein PxcA from Gloeothece citriformis (strain PCC 7424) (Cyanothece sp. (strain PCC 7424)).